Here is a 297-residue protein sequence, read N- to C-terminus: N-acetylmannosamine kinase (297 aa).

ATP is bound by residues 5 to 12 and 132 to 139; these read ALDIGGTK and GVGGGIIL. Positions 156, 166, 168, and 173 each coordinate Zn(2+).

It belongs to the ROK (NagC/XylR) family. NanK subfamily. As to quaternary structure, homodimer.

It catalyses the reaction an N-acyl-D-mannosamine + ATP = an N-acyl-D-mannosamine 6-phosphate + ADP + H(+). The protein operates within amino-sugar metabolism; N-acetylneuraminate degradation; D-fructose 6-phosphate from N-acetylneuraminate: step 2/5. In terms of biological role, catalyzes the phosphorylation of N-acetylmannosamine (ManNAc) to ManNAc-6-P. This Pasteurella multocida (strain Pm70) protein is N-acetylmannosamine kinase.